Consider the following 150-residue polypeptide: SsrA-binding protein (150 aa).

The protein belongs to the SmpB family.

It localises to the cytoplasm. Functionally, required for rescue of stalled ribosomes mediated by trans-translation. Binds to transfer-messenger RNA (tmRNA), required for stable association of tmRNA with ribosomes. tmRNA and SmpB together mimic tRNA shape, replacing the anticodon stem-loop with SmpB. tmRNA is encoded by the ssrA gene; the 2 termini fold to resemble tRNA(Ala) and it encodes a 'tag peptide', a short internal open reading frame. During trans-translation Ala-aminoacylated tmRNA acts like a tRNA, entering the A-site of stalled ribosomes, displacing the stalled mRNA. The ribosome then switches to translate the ORF on the tmRNA; the nascent peptide is terminated with the 'tag peptide' encoded by the tmRNA and targeted for degradation. The ribosome is freed to recommence translation, which seems to be the essential function of trans-translation. This is SsrA-binding protein from Borreliella afzelii (strain PKo) (Borrelia afzelii).